The primary structure comprises 223 residues: Golgi to ER traffic protein 1 (223 aa).

Met-1 is a topological domain (lumenal). A helical transmembrane segment spans residues 2–21 (SWVVAIAVVFVVVLKVLEYS). Topologically, residues 22-105 (TSYHDLVLQS…QIKGHLKKVK (84 aa)) are cytoplasmic. Residues 56–105 (ENKSISAQDNYAKWTKNNRKLDKLDKEITELGAQLKAHNEQIKGHLKKVK) are a coiled coil. A helical membrane pass occupies residues 106-126 (LLLLTVPFLCFKLWKGKHIVY). Residues 127–177 (NLPHHQMFPQLVAGVWSQGWLYLAILPLQLAKSIVTGSSFAIETASFPHMG) lie on the Lumenal side of the membrane. The helical transmembrane segment at 178–194 (VSLGIWLWALNSVISNI) threads the bilayer. Residues 195-223 (EFMTMQLWAKPVSKPSKKLEIVTDEIKVD) are Cytoplasmic-facing.

Belongs to the WRB/GET1 family. Component of the Golgi to ER traffic (GET) complex, which is composed of GET1, GET2 and GET3. Within the complex, GET1 and GET2 form a heterotetramer which is stabilized by phosphatidylinositol binding and which binds to the GET3 homodimer.

The protein resides in the endoplasmic reticulum membrane. Its subcellular location is the golgi apparatus membrane. In terms of biological role, required for the post-translational delivery of tail-anchored (TA) proteins to the endoplasmic reticulum. Together with GET2, acts as a membrane receptor for soluble GET3, which recognizes and selectively binds the transmembrane domain of TA proteins in the cytosol. The GET complex cooperates with the HDEL receptor ERD2 to mediate the ATP-dependent retrieval of resident ER proteins that contain a C-terminal H-D-E-L retention signal from the Golgi to the ER. The protein is Golgi to ER traffic protein 1 of Candida glabrata (strain ATCC 2001 / BCRC 20586 / JCM 3761 / NBRC 0622 / NRRL Y-65 / CBS 138) (Yeast).